Consider the following 1141-residue polypeptide: Eukaryotic translation initiation factor 3 subunit A (1141 aa).

The 183-residue stretch at 319–501 (LQRMAAHVLL…NSIYFGTDLT (183 aa)) folds into the PCI domain. Composition is skewed to basic and acidic residues over residues 588–623 (QNNA…EERE) and 829–899 (AAEE…RGGD). 2 disordered regions span residues 588–631 (QNNA…QNEI) and 829–1141 (AAEE…VKRR). The residue at position 908 (serine 908) is a Phosphoserine. 4 stretches are compositionally biased toward basic and acidic residues: residues 920-976 (ERND…EPDT), 990-1051 (SRDD…EPQR), 1059-1087 (DAPR…RGDQ), and 1110-1131 (TREE…KAGD).

It belongs to the eIF-3 subunit A family. As to quaternary structure, component of the eukaryotic translation initiation factor 3 (eIF-3) complex. The eIF-3 complex interacts with pix.

Its subcellular location is the cytoplasm. Functionally, RNA-binding component of the eukaryotic translation initiation factor 3 (eIF-3) complex, which is involved in protein synthesis of a specialized repertoire of mRNAs and, together with other initiation factors, stimulates binding of mRNA and methionyl-tRNAi to the 40S ribosome. The eIF-3 complex specifically targets and initiates translation of a subset of mRNAs involved in cell proliferation. This chain is Eukaryotic translation initiation factor 3 subunit A, found in Drosophila simulans (Fruit fly).